The chain runs to 1220 residues: ATP-dependent helicase/nuclease subunit A (1220 aa).

The UvrD-like helicase ATP-binding domain maps to 9 to 473; it reads VIWTDDQWKS…IDLSQNFRSR (465 aa). 30–37 contributes to the ATP binding site; that stretch reads AAAGSGKT. In terms of domain architecture, UvrD-like helicase C-terminal spans 474-782; it reads PEVLSTTNYL…RMMTIHASKG (309 aa).

It belongs to the helicase family. AddA subfamily. In terms of assembly, heterodimer of AddA and AddB/RexB. It depends on Mg(2+) as a cofactor.

The catalysed reaction is Couples ATP hydrolysis with the unwinding of duplex DNA by translocating in the 3'-5' direction.. The enzyme catalyses ATP + H2O = ADP + phosphate + H(+). In terms of biological role, the heterodimer acts as both an ATP-dependent DNA helicase and an ATP-dependent, dual-direction single-stranded exonuclease. Recognizes the chi site generating a DNA molecule suitable for the initiation of homologous recombination. The AddA nuclease domain is required for chi fragment generation; this subunit has the helicase and 3' -&gt; 5' nuclease activities. The protein is ATP-dependent helicase/nuclease subunit A of Staphylococcus carnosus (strain TM300).